The chain runs to 477 residues: 3-isopropylmalate dehydratase large subunit (477 aa).

Residues cysteine 351, cysteine 411, and cysteine 414 each contribute to the [4Fe-4S] cluster site.

It belongs to the aconitase/IPM isomerase family. LeuC type 1 subfamily. In terms of assembly, heterodimer of LeuC and LeuD. [4Fe-4S] cluster is required as a cofactor.

It catalyses the reaction (2R,3S)-3-isopropylmalate = (2S)-2-isopropylmalate. It participates in amino-acid biosynthesis; L-leucine biosynthesis; L-leucine from 3-methyl-2-oxobutanoate: step 2/4. Functionally, catalyzes the isomerization between 2-isopropylmalate and 3-isopropylmalate, via the formation of 2-isopropylmaleate. The chain is 3-isopropylmalate dehydratase large subunit from Kineococcus radiotolerans (strain ATCC BAA-149 / DSM 14245 / SRS30216).